A 491-amino-acid polypeptide reads, in one-letter code: Probable CtpA-like serine protease (491 aa).

Residues 1-22 (MSESKDTTEVNQEVNEKASSQS) are disordered. Residues 9 to 22 (EVNQEVNEKASSQS) are compositionally biased toward polar residues. A helical membrane pass occupies residues 34 to 54 (FIIILIVTILVTAMIAVFATI). The PDZ domain maps to 119–201 (TKSFNEDVSG…TKVTLTIERG (83 aa)). Active-site charge relay system residues include Ser-324, Asp-335, and Lys-349.

It belongs to the peptidase S41A family.

It localises to the cell membrane. In Staphylococcus saprophyticus subsp. saprophyticus (strain ATCC 15305 / DSM 20229 / NCIMB 8711 / NCTC 7292 / S-41), this protein is Probable CtpA-like serine protease.